The primary structure comprises 125 residues: Classical arabinogalactan protein 27 (125 aa).

A signal peptide spans 1–21 (MASSILLTLITFIFLSSLSLS). Positions 20-36 (LSSPTTNTIPSSQTISP) are enriched in low complexity. The tract at residues 20–95 (LSSPTTNTIP…ASPPASSLAS (76 aa)) is disordered. Residues 53–66 (AVSSTQTIPSSSTL) show a composition bias toward polar residues. The segment covering 77 to 95 (DPDPAFAPSASPPASSLAS) has biased composition (low complexity). The GPI-anchor amidated serine moiety is linked to residue serine 98. The propeptide at 99-125 (QAPGVFIYFVFAAVYCFSLRLLAVSAI) is removed in mature form.

Belongs to the classical AGP family. Post-translationally, O-glycosylated on the hydroxyproline residues.

The protein resides in the cell membrane. Its function is as follows. Proteoglycan that seems to be implicated in diverse developmental roles such as differentiation, cell-cell recognition, embryogenesis and programmed cell death. In Arabidopsis thaliana (Mouse-ear cress), this protein is Classical arabinogalactan protein 27 (AGP27).